Reading from the N-terminus, the 90-residue chain is DNA-directed RNA polymerase subunit omega (90 aa).

This sequence belongs to the RNA polymerase subunit omega family. In terms of assembly, the RNAP catalytic core consists of 2 alpha, 1 beta, 1 beta' and 1 omega subunit. When a sigma factor is associated with the core the holoenzyme is formed, which can initiate transcription.

It catalyses the reaction RNA(n) + a ribonucleoside 5'-triphosphate = RNA(n+1) + diphosphate. Its function is as follows. Promotes RNA polymerase assembly. Latches the N- and C-terminal regions of the beta' subunit thereby facilitating its interaction with the beta and alpha subunits. This Rhodopirellula baltica (strain DSM 10527 / NCIMB 13988 / SH1) protein is DNA-directed RNA polymerase subunit omega.